We begin with the raw amino-acid sequence, 198 residues long: MVPFVLASASPARRQLLQQIGIDPIIQPSHFDESVIQAATPTELVRLLARCKAETVAQSYSAPALILGCDSVLVLGGEIYGKPASPEMAIARWQQMRGQTADLLTGHALIDLAQGRTCVEVESTQVVFAQVSDAEIAAYVASGEPLACAGCFALDGQGGAFVEKIVGTPSNVIGLSLPLLRRLLLSLGYTLADVQNKK.

Asp-70 (proton acceptor) is an active-site residue.

This sequence belongs to the Maf family. The cofactor is a divalent metal cation.

It is found in the cytoplasm. The enzyme catalyses a ribonucleoside 5'-triphosphate + H2O = a ribonucleoside 5'-phosphate + diphosphate + H(+). It catalyses the reaction a 2'-deoxyribonucleoside 5'-triphosphate + H2O = a 2'-deoxyribonucleoside 5'-phosphate + diphosphate + H(+). Nucleoside triphosphate pyrophosphatase. May have a dual role in cell division arrest and in preventing the incorporation of modified nucleotides into cellular nucleic acids. This Thermosynechococcus vestitus (strain NIES-2133 / IAM M-273 / BP-1) protein is Nucleoside triphosphate pyrophosphatase.